The primary structure comprises 121 residues: Basic phospholipase A2 homolog zhaoermiatoxin (121 aa).

7 cysteine pairs are disulfide-bonded: Cys26-Cys115, Cys28-Cys44, Cys43-Cys95, Cys49-Cys121, Cys50-Cys88, Cys57-Cys81, and Cys75-Cys86.

This sequence belongs to the phospholipase A2 family. Group II subfamily. R49 sub-subfamily. Homodimer. Expressed by the venom gland.

It is found in the secreted. Snake venom phospholipase A2 homolog that induces myonecrosis, and edema. Has low myotoxic activity. This chain is Basic phospholipase A2 homolog zhaoermiatoxin, found in Protobothrops mangshanensis (Mangshan pitviper).